A 481-amino-acid chain; its full sequence is MPGGRRGPSRQQLSRSALPSLQTLVGGGLSNGAGLRCRSSSAVGLSAPPLTALITPEPVRHSRIPDLPLDSNLLFETLLLLYLLVALLVQYINIYRTVWWSSYSQPTASTSLNFHLMDAHLAVFIAVMLSRRLVWTLLSEVCVACPASPLCYVLLLVVRVCVLTLCGWVLCWTLLNLFRSHSVLKLLFLGYPFGVYVPLCCLHQDGSPAADCGFADADGADGALLQPRDFLTLLRENLRQQLSGTHTHTHTHTCPPSPELIRSEVQQLKTDFNRRIKEVLFNSLLSAYYVAFLPLCFVKSTQYYDMRWSCEHLIMVWINAFVMLMSHLLPPHYCDLLHRCAAHLGRWQRLEPGSCSNTPQHTWSDSTIWPQGVLVRHSRCLYKAVGPYNVALPSDVSHARFYFLFHKPLRLLNVLIGIECSVVVYQLYSLLRSERWNHTLSLGLILVCNYYVLFKLLRDRLVLGKAYSHPLGSAGLGMKRD.

A run of 8 helical transmembrane segments spans residues 74-94, 109-129, 150-170, 182-202, 278-298, 313-333, 411-431, and 437-457; these read LFET…YINI, STSL…AVML, LCYV…GWVL, SVLK…LCCL, EVLF…LCFV, LIMV…PPHY, LLNV…YSLL, and NHTL…FKLL.

It belongs to the TMEM39 family.

It localises to the endoplasmic reticulum membrane. Regulates autophagy by controlling the spatial distribution and levels of the intracellular phosphatidylinositol 4-phosphate (PtdIns(4)P) pools. Modulates (PtdIns(4)P) levels by regulating the ER-to-Golgi trafficking of the phosphatidylinositide phosphatase SACM1L. The chain is Transmembrane protein 39A (tmem39a) from Danio rerio (Zebrafish).